The following is a 970-amino-acid chain: Cullin-4B (970 aa).

Positions 1 to 14 (MSRSTRSKERREND) are enriched in basic and acidic residues. Disordered stretches follow at residues 1–157 (MSRS…SFCL) and 189–211 (AEES…QQQQ). Position 15 is a phosphothreonine (Thr-15). Ser-17 is subject to Phosphoserine. Residues 36–57 (PPRPPYPPLLPPVFPPPTPPPQ) show a composition bias toward pro residues. The span at 78 to 98 (SGFSSPNPSAASAAAQEVRSA) shows a compositional bias: low complexity. Residues 99–109 (TDGNTSTTPPT) are compositionally biased toward polar residues. Thr-106 carries the post-translational modification Phosphothreonine. Residue Ser-110 is modified to Phosphoserine. The short motif at 112 to 115 (KKRK) is the Nuclear localization signal element. The segment covering 117 to 126 (NSSSSSSNSS) has biased composition (low complexity). Over residues 146–155 (DSASPSTSSF) the composition is skewed to polar residues. Ser-154 and Ser-200 each carry phosphoserine. The span at 192–211 (SSSSSSSSSPTAATSQQQQQ) shows a compositional bias: low complexity. Phosphothreonine is present on Thr-202. Lys-247 is covalently cross-linked (Glycyl lysine isopeptide (Lys-Gly) (interchain with G-Cter in ubiquitin)). Ser-250 carries the phosphoserine modification. The Cullin neddylation domain occupies 902–962 (DRQYQIDAAI…RDYMERDKEN (61 aa)). Lys-916 participates in a covalent cross-link: Glycyl lysine isopeptide (Lys-Gly) (interchain with G-Cter in NEDD8).

It belongs to the cullin family. In terms of assembly, component of multiple DCX (DDB1-CUL4-X-box) E3 ubiquitin-protein ligase complexes that seem to be formed of DDB1, CUL4A or CUL4B, RBX1 and a variable substrate recognition component which seems to belong to a protein family described as DCAF (Ddb1- and Cul4-associated factor) or CDW (CUL4-DDB1-associated WD40-repeat) proteins. Component of the DCX(DTL) complex with the putative substrate recognition component DTL. Component of the DCX(DDB2) complex with the putative substrate recognition component DDB2. Component of DCX complexes part of the DesCEND (destruction via C-end degrons) pathway, which contain either TRPC4AP or DCAF12 as substrate-recognition component. Component of the DCX(AMBRA1) complex with the substrate recognition component AMBRA1. Part of a complex with RBX1 and TIP120A/CAND1. Component of the DCX(WDR77) complex, composed of Cul4b, Ddb1, Wdr77 and Rbx1. Interacts with RBX1, GRWD1, MLST8, SMU1, TLE2, TLE3, DCAF1, DDA1, DCAF6, DCAF17, DDB2, DCAF8, TIP120A/CAND1 and TMEM113. Interacts with cyclin E (CCNE1 or CCNE2) and with importins alpha-1 (KPNA2), alpha-3 (KPNA4), alpha-5 (KPNA1) and beta-1 (KPNB1). May interact with WDR26, WDR51B, SNRNP40, WDR61, WDR76 and WDR5. Interacts (unneddylated form) with DCUN1D1, DCUN1D2, DCUN1D3, DCUN1D4 and DCUN1D5; these interactions promote the cullin neddylation. In terms of processing, neddylated. Deneddylated via its interaction with the COP9 signalosome (CSN) complex. Expressed in oocytes (at protein level).

The protein resides in the cytoplasm. It localises to the nucleus. It participates in protein modification; protein ubiquitination. Core component of multiple cullin-RING-based E3 ubiquitin-protein ligase complexes which mediate the ubiquitination and subsequent proteasomal degradation of target proteins. The functional specificity of the E3 ubiquitin-protein ligase complex depends on the variable substrate recognition subunit. CUL4B may act within the complex as a scaffold protein, contributing to catalysis through positioning of the substrate and the ubiquitin-conjugating enzyme. Plays a role as part of the E3 ubiquitin-protein ligase complex in polyubiquitination of CDT1, histone H2A, histone H3 and histone H4 in response to radiation-induced DNA damage. Targeted to UV damaged chromatin by DDB2 and may be important for DNA repair and DNA replication. A number of DCX complexes (containing either TRPC4AP or DCAF12 as substrate-recognition component) are part of the DesCEND (destruction via C-end degrons) pathway, which recognizes a C-degron located at the extreme C terminus of target proteins, leading to their ubiquitination and degradation. The DCX(AMBRA1) complex is a master regulator of the transition from G1 to S cell phase by mediating ubiquitination of phosphorylated cyclin-D (CCND1, CCND2 and CCND3). The DCX(AMBRA1) complex also acts as a regulator of Cul5-RING (CRL5) E3 ubiquitin-protein ligase complexes by mediating ubiquitination and degradation of Elongin-C (ELOC) component of CRL5 complexes. Required for ubiquitination of cyclin E (CCNE1 or CCNE2), and consequently, normal G1 cell cycle progression. Component of the DCX(WDR77) complex, which mediates ubiquitination and degradation of Irgm1 in intestinal cells. Regulates the mammalian target-of-rapamycin (mTOR) pathway involved in control of cell growth, size and metabolism. Specific CUL4B regulation of the mTORC1-mediated pathway is dependent upon 26S proteasome function and requires interaction between CUL4B and MLST8. With CUL4A, contributes to ribosome biogenesis. The sequence is that of Cullin-4B from Mus musculus (Mouse).